A 435-amino-acid polypeptide reads, in one-letter code: tRNA-2-methylthio-N(6)-dimethylallyladenosine synthase (435 aa).

The region spanning 2–117 (KKASIITYGC…IPQAIEKIEN (116 aa)) is the MTTase N-terminal domain. Residues C11, C47, C80, C154, C158, and C161 each contribute to the [4Fe-4S] cluster site. In terms of domain architecture, Radical SAM core spans 140-370 (FGSDQTASIS…MEVQNKCSFY (231 aa)). In terms of domain architecture, TRAM spans 373–435 (SKYKGRIVKV…KTWTLYGEIV (63 aa)).

The protein belongs to the methylthiotransferase family. MiaB subfamily. As to quaternary structure, monomer. The cofactor is [4Fe-4S] cluster.

The protein localises to the cytoplasm. The catalysed reaction is N(6)-dimethylallyladenosine(37) in tRNA + (sulfur carrier)-SH + AH2 + 2 S-adenosyl-L-methionine = 2-methylsulfanyl-N(6)-dimethylallyladenosine(37) in tRNA + (sulfur carrier)-H + 5'-deoxyadenosine + L-methionine + A + S-adenosyl-L-homocysteine + 2 H(+). Catalyzes the methylthiolation of N6-(dimethylallyl)adenosine (i(6)A), leading to the formation of 2-methylthio-N6-(dimethylallyl)adenosine (ms(2)i(6)A) at position 37 in tRNAs that read codons beginning with uridine. The protein is tRNA-2-methylthio-N(6)-dimethylallyladenosine synthase of Fusobacterium nucleatum subsp. nucleatum (strain ATCC 25586 / DSM 15643 / BCRC 10681 / CIP 101130 / JCM 8532 / KCTC 2640 / LMG 13131 / VPI 4355).